Here is a 584-residue protein sequence, read N- to C-terminus: Cilia- and flagella-associated protein 184 (584 aa).

Composition is skewed to basic and acidic residues over residues Met-1 to Leu-18, Pro-42 to Glu-57, and Ser-67 to Val-82. The disordered stretch occupies residues Met-1–Ala-243. The span at Asp-119–Glu-146 shows a compositional bias: acidic residues. The segment covering Ala-189–Lys-232 has biased composition (basic and acidic residues). 2 coiled-coil regions span residues Leu-317–Gln-470 and Leu-530–His-561.

It belongs to the CFAP184 family. In terms of assembly, forms a complex with CFAP263; the interaction is required for functional activity in cilia.

The protein localises to the cell projection. The protein resides in the cilium. It is found in the cytoplasm. It localises to the cytoskeleton. Its subcellular location is the microtubule organizing center. The protein localises to the centrosome. Its function is as follows. In complex with CFAP263, acts as a regulator of ciliary beating that connects radial spoke 3 (RS3) to the inner dynein arm (IDA) and the nexin-dynein regulatory complex (N-DRC). The complex is positioned parallel to N-DRC and forms a connection between the arch at the base of RS3, the IDA tail and N-DRC. This chain is Cilia- and flagella-associated protein 184 (Cfap184), found in Mus musculus (Mouse).